Consider the following 224-residue polypeptide: Non-structural protein V (224 aa).

Residues 55–65 (KNIQYPTTSHQ) show a composition bias toward polar residues. 2 disordered regions span residues 55 to 90 (KNIQ…GTGG) and 145 to 172 (TSTP…GHRR). The Zn(2+) site is built by histidine 170, cysteine 189, cysteine 193, cysteine 205, cysteine 207, cysteine 210, cysteine 214, and cysteine 217.

It belongs to the paramyxoviruses V protein family. Interacts with host IFIH1/MDA5 and DHX58/LGP2. Forms with host DDB1, CUL4A, STAT1, STAT2 and STAT3 the mumps virus V-dependent complex (VDC).

The protein resides in the virion. It localises to the host cytoplasm. Functionally, plays an essential role in the inhibition of host immune response. Prevents the establishment of cellular antiviral state by blocking interferon-alpha/beta (IFN-alpha/beta) production and signaling pathway. Interacts with host IFIH1/MDA5 and DHX58/LGP2 to inhibit the transduction pathway involved in the activation of IFN-beta promoter, thus protecting the virus against cell antiviral state. Blocks the type I and II interferon signaling pathways by interacting with host STAT1, STAT2 and STAT3, and mediating their ubiquitination and subsequent proteasomal degradation. The chain is Non-structural protein V from Mumps virus genotype B (strain Miyahara vaccine) (MuV).